Consider the following 292-residue polypeptide: Putative peptidyl-prolyl cis-trans isomerase NifM (292 aa).

Residues 148–243 (HILVTINEDF…IGFHVLYCES (96 aa)) enclose the PpiC domain.

It belongs to the PpiC/parvulin rotamase family.

It carries out the reaction [protein]-peptidylproline (omega=180) = [protein]-peptidylproline (omega=0). Required for the activation and stabilization of the iron-component (NifH) of nitrogenase. Probable PPIase. The chain is Putative peptidyl-prolyl cis-trans isomerase NifM (nifM) from Azotobacter vinelandii.